We begin with the raw amino-acid sequence, 147 residues long: Hemoglobin subunit beta-2 (147 aa).

N-acetylvaline is present on valine 2. The Globin domain occupies histidine 3–histidine 147. Lysine 18 is subject to N6-succinyllysine. Phosphotyrosine is present on tyrosine 42. Serine 45, serine 51, and serine 53 each carry phosphoserine. Lysine 60 carries the N6-succinyllysine modification. Histidine 64 and histidine 93 together coordinate heme b. At arginine 105 the chain carries Asymmetric dimethylarginine. Threonine 124 is subject to Phosphothreonine.

Belongs to the globin family. Heterotetramer of two alpha chains and two beta chains. Red blood cells.

Involved in oxygen transport from the lung to the various peripheral tissues. This is Hemoglobin subunit beta-2 (Hbb-b2) from Mus musculus (Mouse).